A 240-amino-acid chain; its full sequence is Probable transcriptional regulatory protein A2cp1_1765 (240 aa).

The protein belongs to the TACO1 family.

The protein localises to the cytoplasm. This Anaeromyxobacter dehalogenans (strain 2CP-1 / ATCC BAA-258) protein is Probable transcriptional regulatory protein A2cp1_1765.